Consider the following 254-residue polypeptide: Probable transcriptional regulatory protein Cyan7425_4347 (254 aa).

The protein belongs to the TACO1 family.

It localises to the cytoplasm. The sequence is that of Probable transcriptional regulatory protein Cyan7425_4347 from Cyanothece sp. (strain PCC 7425 / ATCC 29141).